A 187-amino-acid polypeptide reads, in one-letter code: Elongation factor P (187 aa).

This sequence belongs to the elongation factor P family.

It localises to the cytoplasm. Its pathway is protein biosynthesis; polypeptide chain elongation. In terms of biological role, involved in peptide bond synthesis. Stimulates efficient translation and peptide-bond synthesis on native or reconstituted 70S ribosomes in vitro. Probably functions indirectly by altering the affinity of the ribosome for aminoacyl-tRNA, thus increasing their reactivity as acceptors for peptidyl transferase. The polypeptide is Elongation factor P (efp) (Helicobacter pylori (strain J99 / ATCC 700824) (Campylobacter pylori J99)).